Here is a 498-residue protein sequence, read N- to C-terminus: Diacylglycerol O-acyltransferase 1 (498 aa).

Residues 1–66 are disordered; it reads MGDRGGAGSS…AHTRDKDRQT (66 aa). Residues 1 to 92 are Cytoplasmic-facing; it reads MGDRGGAGSS…SLFSSDSGFS (92 aa). The interval 1 to 96 is involved in homomerization; the sequence is MGDRGGAGSS…SDSGFSNYRG (96 aa). S20 is subject to Phosphoserine. Basic and acidic residues predominate over residues 58 to 68; that stretch reads HTRDKDRQTSV. Residues 93 to 127 traverse the membrane as a helical segment; that stretch reads NYRGILNWCVVMLILSNARLSLENLIKYGILVDPI. At 128-139 the chain is on the lumenal side; it reads QVVSLFLKDPYS. The interval 128–139 is extracellular loop 1 (EL1); that stretch reads QVVSLFLKDPYS. The helical transmembrane segment at 140-165 threads the bilayer; it reads WPAPCLIIASNIFIVATFQIEKRLSV. The interval 140–498 is MBOAT fold; it reads WPAPCLIIAS…VLNYDAPVGA (359 aa). At 166–170 the chain is on the cytoplasmic side; the sequence is GALTE. The chain crosses the membrane as a helical span at residues 171–193; it reads QMGLLLHVVNLATIICFPAAVAL. The Lumenal segment spans residues 194-200; the sequence is LVESITP. Residues 201-232 traverse the membrane as a helical segment; sequence VGSLFALASYSIIFLKLSSYRDVNLWCRQRRV. At 233–284 the chain is on the cytoplasmic side; sequence KAKAVSAGKKVSGAAAQNTVSYPDNLTYRDLYYFIFAPTLCYELNFPRSPRI. The tract at residues 235–287 is intracellular loop 1 (IL1); sequence KAVSAGKKVSGAAAQNTVSYPDNLTYRDLYYFIFAPTLCYELNFPRSPRIRKR. Residues 285–319 traverse the membrane as a helical segment; sequence RKRFLLRRVLEMLFFTQLQVGLIQQWMVPTIQNSM. Residues 320-326 lie on the Lumenal side of the membrane; it reads KPFKDMD. Residues 327-364 form a helical membrane-spanning segment; the sequence is YSRIIERLLKLAVPNHLIWLIFFYWLFHSCLNAVAELL. Residues 365–410 lie on the Cytoplasmic side of the membrane; sequence QFGDREFYRDWWNAESVTYFWQNWNIPVHKWCIRHFYKPMLRLGSN. The segment at 365 to 410 is intracellular loop 2 (IL2); it reads QFGDREFYRDWWNAESVTYFWQNWNIPVHKWCIRHFYKPMLRLGSN. The FYXDWWN motif signature appears at 371–377; that stretch reads FYRDWWN. Residues 385 to 393, Y401, and R415 contribute to the an acyl-CoA site; that span reads WQNWNIPVH. Positions 391 to 405 are amphipathic helix (AH); that stretch reads PVHKWCIRHFYKPML. A helical transmembrane segment spans residues 411–431; the sequence is KWMARTGVFWASAFFHEYLVS. Residue H426 is part of the active site. At 432 to 439 the chain is on the lumenal side; it reads IPLRMFRL. Residues 440–458 traverse the membrane as a helical segment; that stretch reads WAFTAMMAQVPLAWIVNRF. The Cytoplasmic segment spans residues 459 to 460; that stretch reads FQ. The chain crosses the membrane as a helical span at residues 461-492; that stretch reads GNYGNAAVWVTLIIGQPVAVLMYVHDYYVLNY. Y488 is a binding site for an acyl-CoA. The Lumenal portion of the chain corresponds to 493–498; the sequence is DAPVGA.

It belongs to the membrane-bound acyltransferase family. Sterol o-acyltransferase subfamily. As to quaternary structure, homodimer or homotetramer; both forms have similar enzymatic activities.

It is found in the endoplasmic reticulum membrane. It carries out the reaction an acyl-CoA + a 1,2-diacyl-sn-glycerol = a triacyl-sn-glycerol + CoA. The enzyme catalyses all-trans-retinol + an acyl-CoA = an all-trans-retinyl ester + CoA. It catalyses the reaction 2-(9Z-octadecenoyl)-glycerol + (9Z)-octadecenoyl-CoA = 1,2-di-(9Z-octadecenoyl)-sn-glycerol + CoA. The catalysed reaction is 1,2-di-(9Z-octadecenoyl)-sn-glycerol + (9Z)-octadecenoyl-CoA = 1,2,3-tri-(9Z-octadecenoyl)-glycerol + CoA. It carries out the reaction all-trans-retinol + hexadecanoyl-CoA = all-trans-retinyl hexadecanoate + CoA. The enzyme catalyses 1-O-(9Z-octadecenyl)-glycerol + (9Z)-octadecenoyl-CoA = 1-O-(9Z-octadecyl)-3-(9Z-octadecenoyl)-glycerol + CoA. It catalyses the reaction 1-O-(9Z-octadecyl)-3-(9Z-octadecenoyl)-glycerol + (9Z)-octadecenoyl-CoA = 1-O-(9Z-octadecenyl)-2,3-di-(9Z-octadecenoyl)glycerol + CoA. The catalysed reaction is 1-(9Z-octadecenoyl)-glycerol + (9Z)-octadecenoyl-CoA = 1,2-di-(9Z-octadecenoyl)-glycerol + CoA. It carries out the reaction 1,2-di-(9Z-octadecenoyl)-glycerol + (9Z)-octadecenoate + H(+) = 1,2,3-tri-(9Z-octadecenoyl)-glycerol + H2O. The enzyme catalyses 1-octadecanoyl-2-(5Z,8Z,11Z,14Z-eicosatetraenoyl)-sn-glycerol + (9Z)-octadecenoyl-CoA = 1-octadecanoyl-2-(5Z,8Z,11Z,14Z)-eicosatetraenoyl-3-(9Z)-octadecenoyl-sn-glycerol + CoA. It catalyses the reaction hexadecane-1,2-diol + 2 hexadecanoyl-CoA = 1,2-O,O-dihexadecanoyl-1,2-hexadecanediol + 2 CoA. The catalysed reaction is hexadecane-1,2-diol + hexadecanoyl-CoA = 2-hydroxyhexadecyl hexadecanoate + CoA. It carries out the reaction 2-(9Z-octadecenoyl)-glycerol + hexadecanoyl-CoA = 1-hexadecanoyl-2-(9Z-octadecenoyl)-sn-glycerol + CoA. The enzyme catalyses 1,2-di-(9Z-octadecenoyl)-sn-glycerol + hexadecanoyl-CoA = 1,2-di-(9Z)-octadecenoyl-3-hexadecanoyl-sn-glycerol + CoA. It catalyses the reaction hexadecan-1-ol + hexadecanoyl-CoA = hexadecanyl hexadecanoate + CoA. The catalysed reaction is 13-cis-retinol + hexadecanoyl-CoA = 13-cis-retinyl hexadecanoate + CoA. It carries out the reaction 1,3-di-(9Z-octadecenoyl)-glycerol + (9Z)-octadecenoyl-CoA = 1,2,3-tri-(9Z-octadecenoyl)-glycerol + CoA. The enzyme catalyses 2,3-di-(9Z)-octadecenoyl-sn-glycerol + (9Z)-octadecenoyl-CoA = 1,2,3-tri-(9Z-octadecenoyl)-glycerol + CoA. It functions in the pathway lipid metabolism; glycerolipid metabolism. Functionally, catalyzes the terminal and only committed step in triacylglycerol synthesis by using diacylglycerol and fatty acyl CoA as substrates. Highly expressed in epithelial cells of the small intestine and its activity is essential for the absorption of dietary fats. In liver, plays a role in esterifying exogenous fatty acids to glycerol, and is required to synthesize fat for storage. Also present in female mammary glands, where it produces fat in the milk. May be involved in VLDL (very low density lipoprotein) assembly. In contrast to DGAT2 it is not essential for survival. Functions as the major acyl-CoA retinol acyltransferase (ARAT) in the skin, where it acts to maintain retinoid homeostasis and prevent retinoid toxicity leading to skin and hair disorders. Exhibits additional acyltransferase activities, includin acyl CoA:monoacylglycerol acyltransferase (MGAT), wax monoester and wax diester synthases. Also able to use 1-monoalkylglycerol (1-MAkG) as an acyl acceptor for the synthesis of monoalkyl-monoacylglycerol (MAMAG). The sequence is that of Diacylglycerol O-acyltransferase 1 from Rattus norvegicus (Rat).